The sequence spans 272 residues: uncharacterized protein (272 aa).

The disordered stretch occupies residues 101 to 130 (CPTGKKNKAPSSLIPKISKTSTSSLTKEDE). Residues 110–125 (PSSLIPKISKTSTSSL) show a composition bias toward low complexity. Serine 142 carries the phosphoserine modification.

This is an uncharacterized protein from Arabidopsis thaliana (Mouse-ear cress).